The following is a 747-amino-acid chain: Kinesin-like protein KIF3B (747 aa).

Methionine 1 carries the post-translational modification N-acetylmethionine. Serine 2 bears the N-acetylserine; in Kinesin-like protein KIF3B, N-terminally processed mark. In terms of domain architecture, Kinesin motor spans 9–340; sequence SVRVVVRCRP…LRYANRAKNI (332 aa). 96–103 is an ATP binding site; that stretch reads GQTGTGKT. A coiled-coil region spans residues 346 to 579; the sequence is VNEDPKDALL…EQTQNELTRE (234 aa). Disordered regions lie at residues 374–412 and 698–747; these read IGRR…DKDD and IQVD…LVPK. The segment covering 393–411 has biased composition (acidic residues); it reads GEEEEEEGEEGEEDGDDKD. The segment at 580-747 is globular; it reads LKLKHLIIEN…YPQSRGLVPK (168 aa). The segment covering 701–710 has biased composition (polar residues); that stretch reads DASSFESTAS. Positions 711-721 are enriched in basic residues; it reads RKPKARPKSGR. A compositionally biased stretch (low complexity) spans 722-735; sequence KSGSSSSSSGNPAS.

It belongs to the TRAFAC class myosin-kinesin ATPase superfamily. Kinesin family. Kinesin II subfamily. As to quaternary structure, heterodimer of KIF3A and KIF3B. KIF3A/KIF3B heterodimer interacts with KIFAP3 forming a heterotrimeric (KIF3A/KIF3B/KIFAP3) complex. Interacts with the SMC3 subunit of the cohesin complex. Interacts directly with IFT20. Interacts with FLCN.

It is found in the cytoplasm. The protein localises to the cytoskeleton. It localises to the cell projection. The protein resides in the cilium. Its subcellular location is the dendritic spine. Functionally, microtubule-based molecular motor that transport intracellular cargos, such as vesicles, organelles and protein complexes. Uses ATP hydrolysis to generate force to bind and move along the microtubule. Plays a role in cilia formation. Involved in photoreceptor integrity and opsin trafficking in rod photoreceptors. Transports vesicles containing N-methyl-D-aspartate (NMDA) receptor subunit GRIN2A into neuronal dendrites. The protein is Kinesin-like protein KIF3B of Mus musculus (Mouse).